The primary structure comprises 208 residues: MKIVEVKHPLVKHKLGLMRAHDISTKRFRELASEVGSLLTYVATADMETEKVTIEGWCGPVEIDQIKGKKITVVPILRAGLGMMDGVLENLPSARISVVGVYRDENTLTPVPYFHKLVSSIDERMALVVDPMLATGGSMIATIDLLKKAGCPCIKVLVLVAAPEGIAALEKAHPDVELYTAAIDKGLNEKGYIMPGLGDAGDKIFGTK.

5-phospho-alpha-D-ribose 1-diphosphate is bound by residues R78, R103, and 130-138 (DPMLATGGS). Uracil is bound by residues I193 and 198–200 (GDA). Residue D199 participates in 5-phospho-alpha-D-ribose 1-diphosphate binding.

The protein belongs to the UPRTase family. Mg(2+) is required as a cofactor.

It catalyses the reaction UMP + diphosphate = 5-phospho-alpha-D-ribose 1-diphosphate + uracil. The protein operates within pyrimidine metabolism; UMP biosynthesis via salvage pathway; UMP from uracil: step 1/1. With respect to regulation, allosterically activated by GTP. Catalyzes the conversion of uracil and 5-phospho-alpha-D-ribose 1-diphosphate (PRPP) to UMP and diphosphate. The polypeptide is Uracil phosphoribosyltransferase (Sodalis glossinidius (strain morsitans)).